The primary structure comprises 681 residues: UvrABC system protein B (681 aa).

The region spanning alanine 32–arginine 419 is the Helicase ATP-binding domain. Residue glycine 45 to serine 52 participates in ATP binding. The Beta-hairpin signature appears at tyrosine 98–isoleucine 121. A Helicase C-terminal domain is found at glutamine 436–leucine 602. The span at glutamate 607–serine 616 shows a compositional bias: polar residues. A disordered region spans residues glutamate 607–asparagine 626. The UVR domain maps to arginine 636–glutamate 671.

Belongs to the UvrB family. As to quaternary structure, forms a heterotetramer with UvrA during the search for lesions. Interacts with UvrC in an incision complex.

It is found in the cytoplasm. In terms of biological role, the UvrABC repair system catalyzes the recognition and processing of DNA lesions. A damage recognition complex composed of 2 UvrA and 2 UvrB subunits scans DNA for abnormalities. Upon binding of the UvrA(2)B(2) complex to a putative damaged site, the DNA wraps around one UvrB monomer. DNA wrap is dependent on ATP binding by UvrB and probably causes local melting of the DNA helix, facilitating insertion of UvrB beta-hairpin between the DNA strands. Then UvrB probes one DNA strand for the presence of a lesion. If a lesion is found the UvrA subunits dissociate and the UvrB-DNA preincision complex is formed. This complex is subsequently bound by UvrC and the second UvrB is released. If no lesion is found, the DNA wraps around the other UvrB subunit that will check the other stand for damage. The sequence is that of UvrABC system protein B from Corynebacterium diphtheriae (strain ATCC 700971 / NCTC 13129 / Biotype gravis).